Here is a 132-residue protein sequence, read N- to C-terminus: Small ribosomal subunit protein uS8 (132 aa).

The protein belongs to the universal ribosomal protein uS8 family. Part of the 30S ribosomal subunit. Contacts proteins S5 and S12.

In terms of biological role, one of the primary rRNA binding proteins, it binds directly to 16S rRNA central domain where it helps coordinate assembly of the platform of the 30S subunit. The polypeptide is Small ribosomal subunit protein uS8 (Borreliella afzelii (strain PKo) (Borrelia afzelii)).